We begin with the raw amino-acid sequence, 388 residues long: Flavin-dependent monooxygenase (388 aa).

FAD is bound by residues 26 to 27 (PV) and 45 to 48 (YERD). Arg54 contributes to the NADPH binding site. Residues Asp61, Arg117, and Leu139 each contribute to the FAD site. Gln192 and Arg213 together coordinate substrate. FAD contacts are provided by residues Asp311 and 321 to 324 (GQGV).

It belongs to the aromatic-ring hydroxylase family. TetX subfamily. Monomer. FAD serves as cofactor.

It localises to the cytoplasm. It carries out the reaction a tetracycline + NADPH + O2 + H(+) = an 11a-hydroxytetracycline + NADP(+) + H2O. It catalyses the reaction tetracycline + NADPH + O2 + H(+) = 11a-hydroxytetracycline + NADP(+) + H2O. The catalysed reaction is tigecycline + NADPH + O2 + H(+) = 11a-hydroxytigecycline + NADP(+) + H2O. The enzyme catalyses oxytetracycline + NADPH + O2 + H(+) = 11a-hydroxy-oxytetracycline + NADP(+) + H2O. With respect to regulation, anhydrotetracycline, a poor substrate, prevents tetracycline degradation in vitro. In terms of biological role, an FAD-requiring monooxygenase active on tetracycline antibiotic derivatives, which leads to their inactivation. Hydroxylates carbon 11a of oxytetracycline and tigecycline. Acts on many tetracycline analogs (chlorotetracycline, demeclocycline, doxycycline, minocycline, oxytetracyclinee), probably by monooxygenization. Tigecycline, a new generation tetracycline antibiotic, is rendered less effective against E.coli by this monooxygenation, is much weaker at inhibiting translation in vitro and binds Mg(2+) considerably less well. Expression in E.coli BW25113 reduces its growth rate about 5%. The reaction probably proceeds by FAD reduction by NADPH and, second, hydroxylation of antibiotic in a ping-pong mechanism. Degrades chlortetracycline, probably by monooxygenation. Slowly oxidizes anhydrotetracycline, the final substrate in tetracycline biosynthesis. In Bacteroides thetaiotaomicron, this protein is Flavin-dependent monooxygenase.